A 90-amino-acid polypeptide reads, in one-letter code: Probable Fe(2+)-trafficking protein (90 aa).

It belongs to the Fe(2+)-trafficking protein family.

Its function is as follows. Could be a mediator in iron transactions between iron acquisition and iron-requiring processes, such as synthesis and/or repair of Fe-S clusters in biosynthetic enzymes. This Cupriavidus pinatubonensis (strain JMP 134 / LMG 1197) (Cupriavidus necator (strain JMP 134)) protein is Probable Fe(2+)-trafficking protein.